Consider the following 387-residue polypeptide: ATP phosphoribosyltransferase regulatory subunit (387 aa).

This sequence belongs to the class-II aminoacyl-tRNA synthetase family. HisZ subfamily. Heteromultimer composed of HisG and HisZ subunits.

Its subcellular location is the cytoplasm. Its pathway is amino-acid biosynthesis; L-histidine biosynthesis; L-histidine from 5-phospho-alpha-D-ribose 1-diphosphate: step 1/9. Its function is as follows. Required for the first step of histidine biosynthesis. May allow the feedback regulation of ATP phosphoribosyltransferase activity by histidine. In Psychrobacter cryohalolentis (strain ATCC BAA-1226 / DSM 17306 / VKM B-2378 / K5), this protein is ATP phosphoribosyltransferase regulatory subunit.